A 186-amino-acid chain; its full sequence is Two-component response regulator ARR6 (186 aa).

A Response regulatory domain is found at His26–Met153. Position 86 is a 4-aspartylphosphate (Asp86).

This sequence belongs to the ARR family. Type-A subfamily. In terms of processing, two-component system major event consists of a His-to-Asp phosphorelay between a sensor histidine kinase (HK) and a response regulator (RR). In plants, the His-to-Asp phosphorelay involves an additional intermediate named Histidine-containing phosphotransfer protein (HPt). This multistep phosphorelay consists of a His-Asp-His-Asp sequential transfer of a phosphate group between first a His and an Asp of the HK protein, followed by the transfer to a conserved His of the HPt protein and finally the transfer to an Asp in the receiver domain of the RR protein. Predominantly expressed in roots.

It localises to the nucleus. Functions as a response regulator involved in His-to-Asp phosphorelay signal transduction system. Phosphorylation of the Asp residue in the receiver domain activates the ability of the protein to promote the transcription of target genes. Type-A response regulators seem to act as negative regulators of the cytokinin signaling. The protein is Two-component response regulator ARR6 (ARR6) of Arabidopsis thaliana (Mouse-ear cress).